The following is a 276-amino-acid chain: Hydroxycinnamoyl-CoA hydratase-lyase (276 aa).

Residues lysine 29, alanine 68, methionine 70, and leucine 72 each contribute to the acetyl-CoA site. Position 75 (tyrosine 75) interacts with vanillin. The acetyl-CoA site is built by glycine 120, serine 142, and tryptophan 146. Vanillin-binding residues include glycine 151 and tyrosine 239.

The protein belongs to the enoyl-CoA hydratase/isomerase family. In terms of assembly, homohexamer; dimer of trimers.

The enzyme catalyses (E)-feruloyl-CoA + H2O = vanillin + acetyl-CoA. It carries out the reaction (E)-caffeoyl-CoA + H2O = 3,4-dihydroxybenzaldehyde + acetyl-CoA. The catalysed reaction is (E)-4-coumaroyl-CoA + H2O = 4-hydroxybenzaldehyde + acetyl-CoA. It catalyses the reaction (E)-feruloyl-CoA + H2O = 3-hydroxy-3-(4-hydroxy-3-methoxyphenyl)propanoyl-CoA. The enzyme catalyses 3-hydroxy-3-(4-hydroxy-3-methoxyphenyl)propanoyl-CoA = vanillin + acetyl-CoA. It carries out the reaction (E)-caffeoyl-CoA + H2O = 3-hydroxy-3-(3,4-dihydroxyphenyl)propanoyl-CoA. The catalysed reaction is 3-hydroxy-3-(3,4-dihydroxyphenyl)propanoyl-CoA = 3,4-dihydroxybenzaldehyde + acetyl-CoA. It catalyses the reaction (E)-4-coumaroyl-CoA + H2O = 3-hydroxy-3-(4-hydroxyphenyl)propanoyl-CoA. The enzyme catalyses 3-hydroxy-3-(4-hydroxyphenyl)propanoyl-CoA = 4-hydroxybenzaldehyde + acetyl-CoA. In terms of biological role, catalyzes the hydration of the acyl-CoA thioester of ferulic acid and the subsequent retro-aldol cleavage of the hydrated intermediate to yield vanillin (4-hydroxy-3-methoxy-benzaldehyde). The enzyme is also active with caffeoyl-CoA and 4-coumaroyl-CoA producing 3,4-dihydroxybenzaldehyde and 4-hydroxybenzaldehyde, respectively. The protein is Hydroxycinnamoyl-CoA hydratase-lyase of Pseudomonas fluorescens.